We begin with the raw amino-acid sequence, 66 residues long: Large ribosomal subunit protein bL33c (66 aa).

It belongs to the bacterial ribosomal protein bL33 family.

It is found in the plastid. The protein resides in the chloroplast. The chain is Large ribosomal subunit protein bL33c from Aethionema cordifolium (Lebanon stonecress).